Here is a 176-residue protein sequence, read N- to C-terminus: tRNA (adenine(37)-N6)-methyltransferase (176 aa).

The region spanning 1 to 94 (SFSHIWVQFV…YLPFVEAQPD (94 aa)) is the TsaA-like domain. Residues His12, 12–13 (HG), Arg40, Leu50, and 74–77 (LDGT) contribute to the S-adenosyl-L-methionine site.

This sequence belongs to the tRNA methyltransferase O family.

It catalyses the reaction N(6)-L-threonylcarbamoyladenosine(37) in tRNA + S-adenosyl-L-methionine = N(6)-methyl,N(6)-L-threonylcarbamoyladenosine(37) in tRNA + S-adenosyl-L-homocysteine + H(+). Functionally, S-adenosyl-L-methionine-dependent methyltransferase responsible for the addition of the methyl group in the formation of N6-methyl-N6-threonylcarbamoyladenosine at position 37 (m(6)t(6)A37) of the tRNA anticodon loop of tRNA(Thr)(GGU). The methyl group of m(6)t(6)A37 appears to slightly improve the efficiency of the tRNA decoding ability. Binds to tRNA. This is tRNA (adenine(37)-N6)-methyltransferase from Eikenella corrodens.